Here is a 197-residue protein sequence, read N- to C-terminus: FMN-dependent NADH:quinone oxidoreductase (197 aa).

FMN contacts are provided by residues serine 10, 16–18 (SQS), 93–96 (MYNF), and 137–140 (TRGG).

Belongs to the azoreductase type 1 family. In terms of assembly, homodimer. FMN is required as a cofactor.

The catalysed reaction is 2 a quinone + NADH + H(+) = 2 a 1,4-benzosemiquinone + NAD(+). It carries out the reaction N,N-dimethyl-1,4-phenylenediamine + anthranilate + 2 NAD(+) = 2-(4-dimethylaminophenyl)diazenylbenzoate + 2 NADH + 2 H(+). Functionally, quinone reductase that provides resistance to thiol-specific stress caused by electrophilic quinones. Its function is as follows. Also exhibits azoreductase activity. Catalyzes the reductive cleavage of the azo bond in aromatic azo compounds to the corresponding amines. The polypeptide is FMN-dependent NADH:quinone oxidoreductase (Shewanella frigidimarina (strain NCIMB 400)).